Here is a 678-residue protein sequence, read N- to C-terminus: UvrABC system protein B (678 aa).

Residues 26–185 form the Helicase ATP-binding domain; that stretch reads EGLEDGEAFQ…LTTMQYTRND (160 aa). 39–46 serves as a coordination point for ATP; the sequence is GVTGSGKT. The Beta-hairpin motif lies at 92 to 115; the sequence is YYDYYQPEAYVPASDTYIAKDSSV. One can recognise a Helicase C-terminal domain in the interval 430 to 596; the sequence is QVDDLLGEIR…KLNKKITDIL (167 aa). The tract at residues 597-630 is disordered; it reads EDSPYAPKPGASAAKLKAAEADGEYSPQEMQRMT. Residues 635–670 enclose the UVR domain; sequence ASEIKRMEKQMYQAAKDLDFELAAKLRDDLKRLKSS.

This sequence belongs to the UvrB family. Forms a heterotetramer with UvrA during the search for lesions. Interacts with UvrC in an incision complex.

It is found in the cytoplasm. In terms of biological role, the UvrABC repair system catalyzes the recognition and processing of DNA lesions. A damage recognition complex composed of 2 UvrA and 2 UvrB subunits scans DNA for abnormalities. Upon binding of the UvrA(2)B(2) complex to a putative damaged site, the DNA wraps around one UvrB monomer. DNA wrap is dependent on ATP binding by UvrB and probably causes local melting of the DNA helix, facilitating insertion of UvrB beta-hairpin between the DNA strands. Then UvrB probes one DNA strand for the presence of a lesion. If a lesion is found the UvrA subunits dissociate and the UvrB-DNA preincision complex is formed. This complex is subsequently bound by UvrC and the second UvrB is released. If no lesion is found, the DNA wraps around the other UvrB subunit that will check the other stand for damage. This is UvrABC system protein B from Hydrogenovibrio crunogenus (strain DSM 25203 / XCL-2) (Thiomicrospira crunogena).